The sequence spans 634 residues: TATA box-binding protein-associated factor RNA polymerase I subunit B (634 aa).

An RRN7-type zinc finger spans residues 19–51 (LVCEYCGHGSEYAEDDADNGFFTCRQCSAIHTS). C21, C24, C42, and C45 together coordinate Zn(2+). The B-reader stretch occupies residues 51–80 (STQNTATNPFDFPMTPAHLSAHRRPTQPTP). Residues 56 to 117 (ATNPFDFPMT…EPRDFATGAN (62 aa)) are disordered. A compositionally biased stretch (pro residues) spans 77–87 (QPTPTPKPFPA). Residues 81–83 (TPK) are B-linker. Residues 84 to 281 (PFPAPRGAAT…DKLLGSSLND (198 aa)) are N-terminal cyclin fold. Low complexity predominate over residues 88 to 98 (PRGAATGAAAP). The tract at residues 282 to 284 (CPL) is C-terminal cyclin fold.

The protein belongs to the RRN7/TAF1B family.

The protein localises to the nucleus. Its subcellular location is the nucleolus. In terms of biological role, component of RNA polymerase I core factor complex that acts as a GTF2B/TFIIB-like factor and plays a key role in multiple steps during transcription initiation such as pre-initiation complex (PIC) assembly and postpolymerase recruitment events in polymerase I (Pol I) transcription. Binds rDNA promoters and plays a role in Pol I recruitment. This is TATA box-binding protein-associated factor RNA polymerase I subunit B from Oryza sativa subsp. indica (Rice).